Reading from the N-terminus, the 313-residue chain is Olfactory receptor 4M1 (313 aa).

At 1–25 the chain is on the extracellular side; that stretch reads METANYTKVTEFVLTGLSQTREVQL. An N-linked (GlcNAc...) asparagine glycan is attached at Asn5. The chain crosses the membrane as a helical span at residues 26–49; sequence VLFVIFLSFYLFILPGNILIICTI. Topologically, residues 50–57 are cytoplasmic; that stretch reads RLDPHLTS. Residues 58 to 79 form a helical membrane-spanning segment; that stretch reads PMYFLLANLALLDIWYSSITAP. Over 80–100 the chain is Extracellular; it reads KMLIDFFVERKIISFGGCIAQ. Cys97 and Cys189 form a disulfide bridge. A helical transmembrane segment spans residues 101–120; the sequence is LFFLHFVGASEMFLLTVMAY. Over 121 to 139 the chain is Cytoplasmic; it reads DRYAAICRPLHYATIMNRR. Residues 140-158 traverse the membrane as a helical segment; the sequence is LCCILVALSWMGGFIHSII. Residues 159–195 lie on the Extracellular side of the membrane; sequence QVALIVRLPFCGPNELDSYFCDITQVVRIACANTFPE. Residues 196 to 219 traverse the membrane as a helical segment; the sequence is ELVMICSSGLISVVCFIALLMSYA. The Cytoplasmic segment spans residues 220–237; sequence FLLALLKKHSGSGENTNR. The helical transmembrane segment at 238 to 260 threads the bilayer; it reads AMSTCYSHITIVVLMFGPSIYIY. Residues 261–271 lie on the Extracellular side of the membrane; the sequence is ARPFDSFSLDK. Residues 272–291 form a helical membrane-spanning segment; sequence VVSVFHTVIFPLLNPIIYTL. At 292 to 313 the chain is on the cytoplasmic side; it reads RNKEVKAAMRKVVTKYILCEEK.

Belongs to the G-protein coupled receptor 1 family. Highly expressed in the testis and olfactory bulb.

Its subcellular location is the cell membrane. In terms of biological role, olfactory receptor that acts as a receptor of Asprosin hormone, potentially at the surface of hepatocytes and may help to promote hepatocyte glucose release. The protein is Olfactory receptor 4M1 of Homo sapiens (Human).